A 276-amino-acid chain; its full sequence is MGAPLVALNDGNSIPQVGLGVWQTPPEDTERAVAAALAAGYRHVDTAAAYGNEEQTGRAIAQSGLDRSQVYLVTKLWNSEQGYDATLAAFEASVDRLGVDYLDLYLIHWPVPEKNLFVDTFKAFARLREDGRIRSIGVSNFEPEHLRVLIDSTGIVPAVNQIELHPLLPQRELRELHAQLGIATEAWSPLGQGSLLAHPTVTGVAESHGKTAAQALIRWHMQLGNIVIPKSVNPQRIESNFDVFDFELSEQDMASISSLEDGSRLGPDPKTFNFTG.

Tyrosine 50 (proton donor) is an active-site residue. Residues leucine 190, isoleucine 228, lysine 230, serine 231, valine 232, arginine 236, serine 239, and asparagine 240 each coordinate NADPH. Residues 257–276 (SSLEDGSRLGPDPKTFNFTG) form a disordered region.

It belongs to the aldo/keto reductase family.

This Mycobacterium sp. (strain KMS) protein is Aldo-keto reductase Mkms_1985.